We begin with the raw amino-acid sequence, 966 residues long: Mitogen-activated protein kinase kinase kinase 13 (966 aa).

The disordered stretch occupies residues 1 to 59 (MANPQEHLSCSSSPRLPLSENKTFNGLQDDLAPMGSHASPKLLKDQQEKGMVQTELAEG). Residues 8–19 (LSCSSSPRLPLS) show a composition bias toward low complexity. Residues 168–409 (ISELQWLGSG…FRQTLMHLDI (242 aa)) form the Protein kinase domain. ATP is bound by residues 174–182 (LGSGAQGAV) and K195. Catalysis depends on D279, which acts as the Proton acceptor. Leucine-zipper regions lie at residues 433–454 (VKKH…DEEL) and 486–507 (LSAI…EQAV). Residues 457 to 496 (RRREELRHALDIREHYERKLERANNLYMELSAIMLQLEMR) are a coiled coil. Disordered stretches follow at residues 561–663 (EVAP…GQDI), 743–874 (LDVP…DELA), and 937–966 (QFEE…SATW). Low complexity predominate over residues 567 to 581 (SPLSGSPKLSSSSSK). Basic residues predominate over residues 582–594 (SRYRSKPRHRRGN). Residues 609–622 (QPAQEDSPHPTSLH) show a composition bias toward polar residues. Over residues 629 to 642 (PSSQHHNLLQQQYQ) the composition is skewed to low complexity. Positions 814–827 (DSSEEEEGEVDSEV) are enriched in acidic residues. The segment at 815 to 828 (SSEEEEGEVDSEVE) is acidic. The span at 840 to 855 (SSCQSYSTFSSENFSV) shows a compositional bias: polar residues. Acidic residues predominate over residues 939–950 (EESDCDSSDGEC). Over residues 954–966 (TVRTNKHYSSATW) the composition is skewed to polar residues.

It belongs to the protein kinase superfamily. Ser/Thr protein kinase family. As to quaternary structure, homodimer; forms dimers through the leucine-zipper motif. Interacts with the C-terminus of MAPK8IP1 through the kinase catalytic domain. Binds PRDX3. Associates with the IKK complex through the kinase domain. Mg(2+) is required as a cofactor. Autophosphorylated on serine and threonine residues.

The protein resides in the cytoplasm. The protein localises to the membrane. The catalysed reaction is L-seryl-[protein] + ATP = O-phospho-L-seryl-[protein] + ADP + H(+). The enzyme catalyses L-threonyl-[protein] + ATP = O-phospho-L-threonyl-[protein] + ADP + H(+). Activated by autophosphorylation and homodimerization. In terms of biological role, activates the JUN N-terminal pathway through activation of the MAP kinase kinase MAP2K7. Acts synergistically with PRDX3 to regulate the activation of NF-kappa-B in the cytosol. This activation is kinase-dependent and involves activating the IKK complex, the IKBKB-containing complex that phosphorylates inhibitors of NF-kappa-B. The protein is Mitogen-activated protein kinase kinase kinase 13 (MAP3K13) of Bos taurus (Bovine).